Here is an 801-residue protein sequence, read N- to C-terminus: MGFYGGGSMASGRPESTGIDSLGIGKILAVYIKDNENLAIDEDKLQLTAELIRVFSASPGRDIVSQVNEDGGGSFSLSLDLQQFKKISDIENFFINLEDNPKGVIPCMNAAVHKVLFDQWETNEFENVMKINVRLHNYPESSISLKNLRAAYIGKLVTVHGTVVKVSTVKPLVTQMAFDCGKCKTGITREFTDGKFSPPLKCDSHGCKSKTFTPIRSSAQTIDFQKIRVQELQKPEDHEEGRVPRTVECELMEDLVDICIPGDVVTVTGIIGVINNYMDIGGGKSKTKNQGFYYLFIEAVSVKNTKRQSAFENSEDSSSSAQTADVGDLYSFSQRDLEFIVKFKEEYGSDTFRRILHSVCPSIYGHEIVKAGITLSLFGGVRKHSMDRNKVPVRGDIHVIIVGDPGLGKSQLLQAAAAISPRGIYVCGNATTRAGLTVAVVKDSMTNDYAFEAGAMVLADGGLCCIDEFDKMTTEHQALLEAMEQQCVSVAKAGLVASLSARTSVIAAANPVGGHYNRAKTVNENLKMSAALLSRFDLVFILLDKPDELLDKQVSEHIMSLHSASGETSPALKKFKPVNAASQNAGYANMHAEGNSLLSRLRLDSEKDDDFSPVPGQLLRKYISYARNFVNPKMSKDAGEIIQKFYLKLRDHNTSADSTPITARQLESLVRLAQARARVDLREEITVQDAMDVVEIMKESLYDKLIDEHGVVDFGRSGGMSQQKEAKRFLSALDKQSELQQKDCFSVSEMYSLADRIGLRVPDIDTFLENLNIAGYLLKKGPKTYQVLSSSYSRSQSSRSR.

Residues 180–207 form a C4-type zinc finger; sequence CGKCKTGITREFTDGKFSPPLKCDSHGC. The MCM domain occupies 351–558; sequence TFRRILHSVC…LLDKQVSEHI (208 aa). An ATP-binding site is contributed by 403–410; the sequence is GDPGLGKS. An Arginine finger motif is present at residues 534 to 537; it reads SRFD.

This sequence belongs to the MCM family.

The protein localises to the nucleus. It carries out the reaction ATP + H2O = ADP + phosphate + H(+). Functionally, probable DNA helicase that plays a role in meiotic double-strand break (DSB) repair, but seems not required for recombination with the homologous chromosome. May be involved with RAD51 in a backup pathway that repairs meiotic DSB without giving meiotic crossover, in parallel to the meiotic homologous recombination which relies on DMC1. In Arabidopsis thaliana (Mouse-ear cress), this protein is Probable DNA helicase MCM8 (MCM8).